The sequence spans 485 residues: 4-alpha-glucanotransferase (485 aa).

Belongs to the disproportionating enzyme family.

The protein localises to the cytoplasm. It carries out the reaction Transfers a segment of a (1-&gt;4)-alpha-D-glucan to a new position in an acceptor, which may be glucose or a (1-&gt;4)-alpha-D-glucan.. The protein is 4-alpha-glucanotransferase (malQ) of Aquifex aeolicus (strain VF5).